Here is a 1054-residue protein sequence, read N- to C-terminus: MGEIEGTYRVLQTAGMRLGAQTPVGVSTLEPGQTLLPRMQEKHLHLRVKLLDNTMEIFDIEPKCDGQVLLTQVWKRLNLVECDYFGMEFQNTQSYWIWLEPMKPIIRQIRRPKNVVLRLAVKFFPPDPGQLQEEYTRYLFALQLKRDLLEERLTCADTTAALLTSHLLQSEIGDYDETLDREHLKVNEYLPGQQHCLEKILEFHQKHVGQTPAESDFQVLEIARKLEMYGIRFHMASDREGTKIQLAVSHMGVLVFQGTTKINTFNWSKVRKLSFKRKRFLIKLHPEVHGPYQDTLEFLLGSRDECKNFWKICVEYHTFFRLLDQPKPKAKAVFFSRGSSFRYSGRTQKQLVDYFKDSGMKRIPYERRHSKTHTSVRALTADLPKQSISFPEGLRTPASPSSANAFYSLSPSTLVPSGLPEFKDSSSSLTDPQVSYVKSPAAERRSGAVAGGPDTPSAQPLGPPALQPGPGLSTKSPQPSPSSRKSPLSLSPAFQVPLGPAEQGSSPLLSPVLSDAGGAGMDCEEPRHKRVPADEAYFIVKEILATERTYLKDLEVITVWFRSAVVKEDAMPATLMTLLFSNIDPIYEFHRGFLREVEQRLALWEGPSKAHTKGSHQRIGDILLRNMRQLKEFTSYFQRHDEVLTELEKATKRCKKLEAVYKEFELQKVCYLPLNTFLLKPIQRLLHYRLLLRRLCGHYSPGHHDYADCHDALKAITEVTTTLQHILIRLENLQKLTELQRDLVGIENLIAPGREFIREGCLHKLTKKGLQQRMFFLFSDMLLYTSKGVAGTSHFRIRGLLPLQGMLVEESDNEWSVPHCFTIYAAQKTIVVAASTRLEKEKWMLDLNSAIQAAKSGGDTAPALPGRTVCTRPPRSPNEVSLEQESEDDARGVRSSLEGHGQHRANTTMHVCWYRNTSVSRADHSAAVENQLSGYLLRKFKNSHGWQKLWVVFTNFCLFFYKTHQDDYPLASLPLLGYSVSIPREADGIHKDYVFKLQFKSHVYFFRAESKYTFERWMEVIQGASSSAGRAPSIVQDGPQPSSGLEGMVRGKEE.

Residues 44 to 324 (LHLRVKLLDN…EYHTFFRLLD (281 aa)) enclose the FERM domain. Phosphoserine is present on residues S389 and S439. The tract at residues 421 to 527 (EFKDSSSSLT…GAGMDCEEPR (107 aa)) is disordered. Over residues 468 to 492 (PGPGLSTKSPQPSPSSRKSPLSLSP) the composition is skewed to low complexity. Positions 535–726 (EAYFIVKEIL…TEVTTTLQHI (192 aa)) constitute a DH domain. The PH 1 domain maps to 755–852 (EFIREGCLHK…WMLDLNSAIQ (98 aa)). The tract at residues 856-894 (SGGDTAPALPGRTVCTRPPRSPNEVSLEQESEDDARGVR) is disordered. Positions 929 to 1026 (ENQLSGYLLR…WMEVIQGASS (98 aa)) constitute a PH 2 domain. Positions 1029 to 1054 (GRAPSIVQDGPQPSSGLEGMVRGKEE) are disordered.

Interacts with PLXNA1. Interaction with PLXNA1 or PIP5K1C lowers its guanine nucleotide exchange activity. Dissociates from PLXNA1 when SEMA3A binds to the receptor. Interacts with PIP5K1C via its FERM domain. The interaction with PIP5K1C is enhanced by SEMA3A binding. Interacts with RAC1.

In terms of biological role, functions as a guanine nucleotide exchange factor that activates RAC1. May have relatively low activity. Plays a role in the response to class 3 semaphorins and remodeling of the actin cytoskeleton. Plays a role in TNFSF11-mediated osteoclast differentiation, especially in podosome rearrangement and reorganization of the actin cytoskeleton. Regulates the activation of ITGB3, integrin signaling and cell adhesion. The sequence is that of FERM, ARHGEF and pleckstrin domain-containing protein 2 (FARP2) from Homo sapiens (Human).